The chain runs to 523 residues: 2-isopropylmalate synthase (523 aa).

The region spanning 12–274 (VVIFDTTLRD…WNKIDTTQLT (263 aa)) is the Pyruvate carboxyltransferase domain. Residues D21, H209, H211, and N245 each coordinate Mn(2+). Residues 398–523 (KLLSLSVIAG…AQGAAAAAAS (126 aa)) are regulatory domain.

Belongs to the alpha-IPM synthase/homocitrate synthase family. LeuA type 1 subfamily. In terms of assembly, homodimer. Mn(2+) is required as a cofactor.

The protein localises to the cytoplasm. It carries out the reaction 3-methyl-2-oxobutanoate + acetyl-CoA + H2O = (2S)-2-isopropylmalate + CoA + H(+). It participates in amino-acid biosynthesis; L-leucine biosynthesis; L-leucine from 3-methyl-2-oxobutanoate: step 1/4. In terms of biological role, catalyzes the condensation of the acetyl group of acetyl-CoA with 3-methyl-2-oxobutanoate (2-ketoisovalerate) to form 3-carboxy-3-hydroxy-4-methylpentanoate (2-isopropylmalate). The protein is 2-isopropylmalate synthase of Bradyrhizobium sp. (strain BTAi1 / ATCC BAA-1182).